Consider the following 176-residue polypeptide: MSLLEGLALFLLLLSGVLVVTLRNAIHAALALILNFLVLAGVYVALDARFLGFIQVIVYAGAIVVLFLFVIMLLFAAQGEIGFDPLVRSRPLAALLALGVAGILAAGLWGLDLAFTQDLKGGLPQALGPLLYGDWLFVLLAVGFLLMAATVVAVALVEPGKASRAKEAEKREEVAR.

5 helical membrane passes run 2 to 22 (SLLE…VVTL), 26 to 46 (IHAA…YVAL), 56 to 76 (VIVY…LLFA), 91 to 111 (PLAA…LWGL), and 137 to 157 (FVLL…VALV).

Belongs to the complex I subunit 6 family. In terms of assembly, NDH-1 is composed of 15 different subunits, Nqo1 to Nqo15. The complex has a L-shaped structure, with the hydrophobic arm (subunits Nqo7, Nqo8 and Nqo10 to Nqo14) embedded in the membrane and the hydrophilic peripheral arm (subunits Nqo1 to Nqo6, Nqo9 and Nqo15) protruding into the bacterial cytoplasm. The hydrophilic domain contains all the redox centers.

It localises to the cell inner membrane. The enzyme catalyses a quinone + NADH + 5 H(+)(in) = a quinol + NAD(+) + 4 H(+)(out). In terms of biological role, NDH-1 shuttles electrons from NADH, via FMN and iron-sulfur (Fe-S) centers, to quinones in the respiratory chain. The immediate electron acceptor for the enzyme in this species is menaquinone. Couples the redox reaction to proton translocation (for every two electrons transferred, four hydrogen ions are translocated across the cytoplasmic membrane), and thus conserves the redox energy in a proton gradient required for the synthesis of ATP. This is NADH-quinone oxidoreductase subunit 10 (nqo10) from Thermus thermophilus (strain ATCC 27634 / DSM 579 / HB8).